A 248-amino-acid chain; its full sequence is UPF0280 protein Maeo_0343 (248 aa).

This sequence belongs to the UPF0280 family.

The polypeptide is UPF0280 protein Maeo_0343 (Methanococcus aeolicus (strain ATCC BAA-1280 / DSM 17508 / OCM 812 / Nankai-3)).